We begin with the raw amino-acid sequence, 447 residues long: Naphthalene 1,2-dioxygenase system, large oxygenase component (447 aa).

A Rieske domain is found at 37–135; the sequence is WLFLTHDSLI…IKKKCLGLKE (99 aa). [2Fe-2S] cluster contacts are provided by C79, H81, C99, and H102. Fe cation contacts are provided by H206, H211, and D360.

This sequence belongs to the bacterial ring-hydroxylating dioxygenase alpha subunit family. As to quaternary structure, the naphthalene dioxygenase (NDO) multicomponent enzyme system is composed of an electron transfer component and a dioxygenase component (iron sulfur protein (ISP)). The electron transfer component is composed of a ferredoxin reductase (NagAa) and a ferredoxin (NagAb), and the dioxygenase component is formed by a large alpha subunit (NagAc) and a small beta subunit (NagAd). [2Fe-2S] cluster is required as a cofactor. Fe(2+) serves as cofactor.

The enzyme catalyses naphthalene + NADH + O2 + H(+) = (1R,2S)-1,2-dihydronaphthalene-1,2-diol + NAD(+). The protein operates within aromatic compound metabolism; naphthalene degradation. Its function is as follows. Component of the naphthalene dioxygenase (NDO) multicomponent enzyme system which catalyzes the incorporation of both atoms of molecular oxygen into naphthalene to form cis-(1R,2S)-dihydroxy-1,2-dihydronaphthalene. The alpha subunit has a catalytic role in the holoenzyme. Also able to use styrene as substrate. The chain is Naphthalene 1,2-dioxygenase system, large oxygenase component from Ralstonia sp.